Here is a 320-residue protein sequence, read N- to C-terminus: o-succinylbenzoate synthase (320 aa).

Lys-133 serves as the catalytic Proton donor. The Mg(2+) site is built by Asp-161, Glu-190, and Asp-213. The active-site Proton acceptor is Lys-235.

The protein belongs to the mandelate racemase/muconate lactonizing enzyme family. MenC type 1 subfamily. It depends on a divalent metal cation as a cofactor.

The enzyme catalyses (1R,6R)-6-hydroxy-2-succinyl-cyclohexa-2,4-diene-1-carboxylate = 2-succinylbenzoate + H2O. The protein operates within quinol/quinone metabolism; 1,4-dihydroxy-2-naphthoate biosynthesis; 1,4-dihydroxy-2-naphthoate from chorismate: step 4/7. It functions in the pathway quinol/quinone metabolism; menaquinone biosynthesis. Functionally, converts 2-succinyl-6-hydroxy-2,4-cyclohexadiene-1-carboxylate (SHCHC) to 2-succinylbenzoate (OSB). This is o-succinylbenzoate synthase from Escherichia coli O127:H6 (strain E2348/69 / EPEC).